The primary structure comprises 113 residues: Hydrogenase maturation factor HypA (113 aa).

Position 2 (H2) interacts with Ni(2+). Positions 73, 76, 89, and 92 each coordinate Zn(2+).

It belongs to the HypA/HybF family.

In terms of biological role, involved in the maturation of [NiFe] hydrogenases. Required for nickel insertion into the metal center of the hydrogenase. The polypeptide is Hydrogenase maturation factor HypA (Beijerinckia indica subsp. indica (strain ATCC 9039 / DSM 1715 / NCIMB 8712)).